Consider the following 198-residue polypeptide: Peptidyl-tRNA hydrolase (198 aa).

Residue Tyr15 participates in tRNA binding. His20 acts as the Proton acceptor in catalysis. TRNA contacts are provided by Phe66, Asn68, and Asn114.

It belongs to the PTH family. As to quaternary structure, monomer.

It is found in the cytoplasm. The enzyme catalyses an N-acyl-L-alpha-aminoacyl-tRNA + H2O = an N-acyl-L-amino acid + a tRNA + H(+). Hydrolyzes ribosome-free peptidyl-tRNAs (with 1 or more amino acids incorporated), which drop off the ribosome during protein synthesis, or as a result of ribosome stalling. Functionally, catalyzes the release of premature peptidyl moieties from peptidyl-tRNA molecules trapped in stalled 50S ribosomal subunits, and thus maintains levels of free tRNAs and 50S ribosomes. The polypeptide is Peptidyl-tRNA hydrolase (Cupriavidus metallidurans (strain ATCC 43123 / DSM 2839 / NBRC 102507 / CH34) (Ralstonia metallidurans)).